The chain runs to 557 residues: NAC domain-containing protein 17 (557 aa).

The NAC domain maps to 16–166 (SAPGFRFHPT…YYALYKLFKK (151 aa)). A DNA-binding region spans residues 115-172 (VGLKKTLVFYRGRAPSGERTDWVMHEYTMDEDELGRCKNPQEYYALYKLFKKSGAGPK). A helical membrane pass occupies residues 526-546 (FLLLSIVGALCAIFWVLVATV).

In terms of tissue distribution, expressed in roots, rosette leaves, cauline leaves, shoot apex, stems and flowers.

The protein localises to the endoplasmic reticulum membrane. Its subcellular location is the nucleus. In terms of biological role, transcriptional activator activated by proteolytic cleavage through regulated intramembrane proteolysis (RIP). Transcriptional activator that acts as a positive regulator of AOX1A during mitochondrial dysfunction. Binds directly to AOX1A promoter. Mediates mitochondrial retrograde signaling. The protein is NAC domain-containing protein 17 of Arabidopsis thaliana (Mouse-ear cress).